The chain runs to 465 residues: Glutamate--tRNA ligase 2 (465 aa).

Residues 8–18 (PSPTGLMHLGN) carry the 'HIGH' region motif. The 'KMSKS' region motif lies at 249 to 253 (PLSKR). K252 is an ATP binding site.

It belongs to the class-I aminoacyl-tRNA synthetase family. Glutamate--tRNA ligase type 1 subfamily. As to quaternary structure, monomer.

It is found in the cytoplasm. It catalyses the reaction tRNA(Glu) + L-glutamate + ATP = L-glutamyl-tRNA(Glu) + AMP + diphosphate. Its function is as follows. Catalyzes the attachment of glutamate to tRNA(Glu) in a two-step reaction: glutamate is first activated by ATP to form Glu-AMP and then transferred to the acceptor end of tRNA(Glu). The chain is Glutamate--tRNA ligase 2 from Coxiella burnetii (strain CbuK_Q154) (Coxiella burnetii (strain Q154)).